We begin with the raw amino-acid sequence, 518 residues long: Cytochrome P450 3A27 (518 aa).

Cysteine 447 provides a ligand contact to heme.

The protein belongs to the cytochrome P450 family. Requires heme as cofactor.

Its subcellular location is the endoplasmic reticulum membrane. The protein resides in the microsome membrane. The enzyme catalyses an organic molecule + reduced [NADPH--hemoprotein reductase] + O2 = an alcohol + oxidized [NADPH--hemoprotein reductase] + H2O + H(+). In terms of biological role, cytochromes P450 are a group of heme-thiolate monooxygenases. In liver microsomes, this enzyme is involved in an NADPH-dependent electron transport pathway. It oxidizes a variety of structurally unrelated compounds, including steroids, fatty acids, and xenobiotics. This chain is Cytochrome P450 3A27 (cyp3a27), found in Oncorhynchus mykiss (Rainbow trout).